The primary structure comprises 28 residues: Endoglucanase (28 aa).

The Nucleophile role is filled by glutamate 20.

This sequence belongs to the glycosyl hydrolase 5 (cellulase A) family.

It localises to the cell membrane. It carries out the reaction Endohydrolysis of (1-&gt;4)-beta-D-glucosidic linkages in cellulose, lichenin and cereal beta-D-glucans.. The polypeptide is Endoglucanase (Schizophyllum commune (Split gill fungus)).